Reading from the N-terminus, the 153-residue chain is Transcriptional repressor NrdR (153 aa).

A zinc finger spans residues 3-34 (CPFCHNQDTRVIDSRAAEEGTAIRRRRSCPAC). The region spanning 46-136 (LMVTKRSGAT…VYRSFESLED (91 aa)) is the ATP-cone domain.

This sequence belongs to the NrdR family. Zn(2+) serves as cofactor.

Functionally, negatively regulates transcription of bacterial ribonucleotide reductase nrd genes and operons by binding to NrdR-boxes. This is Transcriptional repressor NrdR from Thermobifida fusca (strain YX).